Consider the following 815-residue polypeptide: Phenylalanine--tRNA ligase beta subunit (815 aa).

Residues Ser-39–Thr-148 enclose the tRNA-binding domain. One can recognise a B5 domain in the interval Pro-421 to Ser-496. Mg(2+)-binding residues include Asp-474, Asp-480, Glu-483, and Glu-484. One can recognise an FDX-ACB domain in the interval Ser-721–Arg-814.

It belongs to the phenylalanyl-tRNA synthetase beta subunit family. Type 1 subfamily. As to quaternary structure, tetramer of two alpha and two beta subunits. It depends on Mg(2+) as a cofactor.

It localises to the cytoplasm. It catalyses the reaction tRNA(Phe) + L-phenylalanine + ATP = L-phenylalanyl-tRNA(Phe) + AMP + diphosphate + H(+). The chain is Phenylalanine--tRNA ligase beta subunit (pheT) from Rickettsia prowazekii (strain Madrid E).